Consider the following 161-residue polypeptide: MAEKMLVMTSNDGKNIEVPRDVAERSLLIKNMLEDLGDPTEPIPIPNVSENVLSKVLEWCAHHRNDPPSSADDDDSRRKTTDIEEWDQKFMQVDQEMLFEIILAANYLDIKPLLDIGCKTVANMIKGKSPEEIRKTFNIQNDFTPEEEDQIRRENEWAEDR.

The segment at 102–161 is interaction with the F-box domain of F-box proteins; sequence ILAANYLDIKPLLDIGCKTVANMIKGKSPEEIRKTFNIQNDFTPEEEDQIRRENEWAEDR.

This sequence belongs to the SKP1 family. Component of the SCF (SKP1-CUL1-F-box protein) E3 ubiquitin ligase complexes.

The protein operates within protein modification; protein ubiquitination. Functionally, essential component of the SCF (SKP1-CUL1-F-box protein) E3 ubiquitin ligase complexes, which mediate the ubiquitination and subsequent proteasomal degradation of target proteins. Controls sulfur metabolite repression, probably by mediating the inactivation or degradation of the metR transcription factor. This chain is E3 ubiquitin ligase complex SCF subunit sconC (sconC), found in Emericella nidulans (strain FGSC A4 / ATCC 38163 / CBS 112.46 / NRRL 194 / M139) (Aspergillus nidulans).